The following is a 346-amino-acid chain: Very-long-chain 3-oxoacyl-CoA reductase (346 aa).

Residues serine 26 to valine 46 traverse the membrane as a helical segment. Residues valine 71, aspartate 126, aspartate 134, asparagine 153, tyrosine 220, lysine 224, isoleucine 253, and serine 255 each contribute to the NADP(+) site. Tyrosine 220 acts as the Proton donor in catalysis. Lysine 224 functions as the Lowers pKa of active site Tyr in the catalytic mechanism.

This sequence belongs to the short-chain dehydrogenases/reductases (SDR) family.

The protein localises to the endoplasmic reticulum membrane. The enzyme catalyses a very-long-chain (3R)-3-hydroxyacyl-CoA + NADP(+) = a very-long-chain 3-oxoacyl-CoA + NADPH + H(+). It functions in the pathway lipid metabolism; fatty acid biosynthesis. Its function is as follows. Component of the microsomal membrane bound fatty acid elongation system, which produces the 26-carbon very long-chain fatty acids (VLCFA) from palmitate. Catalyzes the reduction of the 3-ketoacyl-CoA intermediate that is formed in each cycle of fatty acid elongation. VLCFAs serve as precursors for ceramide and sphingolipids. The sequence is that of Very-long-chain 3-oxoacyl-CoA reductase from Aspergillus oryzae (strain ATCC 42149 / RIB 40) (Yellow koji mold).